The sequence spans 480 residues: F-box/LRR-repeat protein 14 (480 aa).

The F-box domain occupies 11–58 (DRQMDELPDHLVWDILSKLHTTDDRNSLSLSCKRFFSLDNEQRYSLRI). LRR repeat units lie at residues 61–86 (GLVP…EIIY), 94–119 (GKQV…TLSF), 120–144 (CTFI…KLNF), 145–170 (APRI…HLIR), 171–196 (CLNV…CIKN), 197–222 (CRAI…QFEV), 229–257 (MKVY…SLGN), 258–283 (CIIA…HLDM), 284–309 (CTGV…SLRV), 322–347 (TLRL…KISF), 355–379 (LFSF…SLDH), 380–404 (VCVF…ELVH), 405–429 (CQEV…KLSK), 430–454 (CLGV…VVED), and 455–480 (CPQV…SWMY).

This chain is F-box/LRR-repeat protein 14 (FBL14), found in Arabidopsis thaliana (Mouse-ear cress).